Here is a 524-residue protein sequence, read N- to C-terminus: Glucose-6-phosphate isomerase (524 aa).

Glu-322 (proton donor) is an active-site residue. Catalysis depends on residues His-351 and Lys-453.

Belongs to the GPI family.

The protein resides in the cytoplasm. The catalysed reaction is alpha-D-glucose 6-phosphate = beta-D-fructose 6-phosphate. Its pathway is carbohydrate biosynthesis; gluconeogenesis. It functions in the pathway carbohydrate degradation; glycolysis; D-glyceraldehyde 3-phosphate and glycerone phosphate from D-glucose: step 2/4. Functionally, catalyzes the reversible isomerization of glucose-6-phosphate to fructose-6-phosphate. This is Glucose-6-phosphate isomerase from Prochlorococcus marinus (strain NATL2A).